Reading from the N-terminus, the 120-residue chain is Ribonuclease P protein component (120 aa).

The protein belongs to the RnpA family. As to quaternary structure, consists of a catalytic RNA component (M1 or rnpB) and a protein subunit.

The enzyme catalyses Endonucleolytic cleavage of RNA, removing 5'-extranucleotides from tRNA precursor.. RNaseP catalyzes the removal of the 5'-leader sequence from pre-tRNA to produce the mature 5'-terminus. It can also cleave other RNA substrates such as 4.5S RNA. The protein component plays an auxiliary but essential role in vivo by binding to the 5'-leader sequence and broadening the substrate specificity of the ribozyme. The chain is Ribonuclease P protein component from Pseudoalteromonas atlantica (strain T6c / ATCC BAA-1087).